The sequence spans 160 residues: Lipoprotein signal peptidase (160 aa).

2 helical membrane passes run 60 to 80 and 84 to 104; these read TEWLIAASCLGVILALTAFFL and LPFLDTRPGVAALGIILAGTI. Catalysis depends on residues Asp118 and Asp132. Residues 127 to 147 traverse the membrane as a helical segment; sequence TFNMADSCLTLGIIWLVLLYL.

The protein belongs to the peptidase A8 family.

The protein resides in the cell membrane. It catalyses the reaction Release of signal peptides from bacterial membrane prolipoproteins. Hydrolyzes -Xaa-Yaa-Zaa-|-(S,diacylglyceryl)Cys-, in which Xaa is hydrophobic (preferably Leu), and Yaa (Ala or Ser) and Zaa (Gly or Ala) have small, neutral side chains.. Its pathway is protein modification; lipoprotein biosynthesis (signal peptide cleavage). Functionally, this protein specifically catalyzes the removal of signal peptides from prolipoproteins. This Dehalococcoides mccartyi (strain ATCC BAA-2266 / KCTC 15142 / 195) (Dehalococcoides ethenogenes (strain 195)) protein is Lipoprotein signal peptidase.